The sequence spans 211 residues: Large ribosomal subunit protein eL13 (211 aa).

Lysine 16 carries the N6-acetyllysine modification. A phosphoserine mark is found at serine 77 and serine 106. Residues lysine 123 and lysine 145 each participate in a glycyl lysine isopeptide (Lys-Gly) (interchain with G-Cter in SUMO2) cross-link. A Glycyl lysine isopeptide (Lys-Gly) (interchain with G-Cter in SUMO1); alternate cross-link involves residue lysine 174. Residues lysine 174 and lysine 177 each participate in a glycyl lysine isopeptide (Lys-Gly) (interchain with G-Cter in SUMO2); alternate cross-link. Lysine 177 is subject to N6-acetyllysine; alternate.

Belongs to the eukaryotic ribosomal protein eL13 family. In terms of assembly, component of the 60S large ribosomal subunit (LSU).

The protein localises to the cytoplasm. Component of the ribosome, a large ribonucleoprotein complex responsible for the synthesis of proteins in the cell. The small ribosomal subunit (SSU) binds messenger RNAs (mRNAs) and translates the encoded message by selecting cognate aminoacyl-transfer RNA (tRNA) molecules. The large subunit (LSU) contains the ribosomal catalytic site termed the peptidyl transferase center (PTC), which catalyzes the formation of peptide bonds, thereby polymerizing the amino acids delivered by tRNAs into a polypeptide chain. The nascent polypeptides leave the ribosome through a tunnel in the LSU and interact with protein factors that function in enzymatic processing, targeting, and the membrane insertion of nascent chains at the exit of the ribosomal tunnel. As part of the LSU, it is probably required for its formation and the maturation of rRNAs. Plays a role in bone development. The sequence is that of Large ribosomal subunit protein eL13 (RPL13) from Oryctolagus cuniculus (Rabbit).